Consider the following 428-residue polypeptide: Gamma-glutamyl phosphate reductase (428 aa).

It belongs to the gamma-glutamyl phosphate reductase family.

Its subcellular location is the cytoplasm. The enzyme catalyses L-glutamate 5-semialdehyde + phosphate + NADP(+) = L-glutamyl 5-phosphate + NADPH + H(+). The protein operates within amino-acid biosynthesis; L-proline biosynthesis; L-glutamate 5-semialdehyde from L-glutamate: step 2/2. Catalyzes the NADPH-dependent reduction of L-glutamate 5-phosphate into L-glutamate 5-semialdehyde and phosphate. The product spontaneously undergoes cyclization to form 1-pyrroline-5-carboxylate. The polypeptide is Gamma-glutamyl phosphate reductase (Streptomyces coelicolor (strain ATCC BAA-471 / A3(2) / M145)).